The primary structure comprises 1427 residues: DNA-directed RNA polymerase subunit beta' (1427 aa).

Cysteine 70, cysteine 72, cysteine 85, and cysteine 88 together coordinate Zn(2+). Mg(2+) contacts are provided by aspartate 461, aspartate 463, and aspartate 465. Zn(2+) contacts are provided by cysteine 810, cysteine 884, cysteine 891, and cysteine 894. Disordered stretches follow at residues glutamine 1044–glycine 1065 and proline 1394–alanine 1427.

It belongs to the RNA polymerase beta' chain family. As to quaternary structure, the RNAP catalytic core consists of 2 alpha, 1 beta, 1 beta' and 1 omega subunit. When a sigma factor is associated with the core the holoenzyme is formed, which can initiate transcription. Mg(2+) serves as cofactor. The cofactor is Zn(2+).

It catalyses the reaction RNA(n) + a ribonucleoside 5'-triphosphate = RNA(n+1) + diphosphate. DNA-dependent RNA polymerase catalyzes the transcription of DNA into RNA using the four ribonucleoside triphosphates as substrates. The chain is DNA-directed RNA polymerase subunit beta' from Novosphingobium aromaticivorans (strain ATCC 700278 / DSM 12444 / CCUG 56034 / CIP 105152 / NBRC 16084 / F199).